We begin with the raw amino-acid sequence, 98 residues long: MSMVYANIFLAFIMSLMGLLMYRSHLMSSLLCLEGMMLSLFVMMTVTILNNHFTLASMTPIILLVFAACEAALGLSLLVMVSNTYGTDYVQNLNLLPC.

The next 3 helical transmembrane spans lie at 1 to 21 (MSMV…GLLM), 29 to 49 (SLLC…VTIL), and 61 to 81 (IILL…LVMV).

It belongs to the complex I subunit 4L family. In terms of assembly, core subunit of respiratory chain NADH dehydrogenase (Complex I) which is composed of 45 different subunits.

The protein localises to the mitochondrion inner membrane. It catalyses the reaction a ubiquinone + NADH + 5 H(+)(in) = a ubiquinol + NAD(+) + 4 H(+)(out). Functionally, core subunit of the mitochondrial membrane respiratory chain NADH dehydrogenase (Complex I) which catalyzes electron transfer from NADH through the respiratory chain, using ubiquinone as an electron acceptor. Part of the enzyme membrane arm which is embedded in the lipid bilayer and involved in proton translocation. The sequence is that of NADH-ubiquinone oxidoreductase chain 4L (MT-ND4L) from Erignathus barbatus (Bearded seal).